The chain runs to 84 residues: Small ribosomal subunit protein uS17 (84 aa).

Belongs to the universal ribosomal protein uS17 family. As to quaternary structure, part of the 30S ribosomal subunit.

Its function is as follows. One of the primary rRNA binding proteins, it binds specifically to the 5'-end of 16S ribosomal RNA. The chain is Small ribosomal subunit protein uS17 from Klebsiella pneumoniae subsp. pneumoniae (strain ATCC 700721 / MGH 78578).